Reading from the N-terminus, the 343-residue chain is UPF0324 membrane protein LJ_1117 (343 aa).

10 consecutive transmembrane segments (helical) span residues 10–27 (FGLA…GIFL), 32–54 (YVNL…VLPV), 64–86 (IGFI…LNLT), 91–113 (AGIK…TYWL), 123–145 (LAVL…VSPQ), 157–179 (NEVL…EIVI), 219–241 (ALIM…GYWY), 262–284 (IPWF…FPPV), 288–310 (GLVQ…SVNF), and 317–339 (GGTV…IIMS).

Belongs to the UPF0324 family.

The protein localises to the cell membrane. This is UPF0324 membrane protein LJ_1117 from Lactobacillus johnsonii (strain CNCM I-12250 / La1 / NCC 533).